Consider the following 369-residue polypeptide: Trichocyst matrix protein T1-B (369 aa).

A signal peptide spans 1-16; that stretch reads MYKLAVCTLLILSVTA. Residues 17–55 constitute a propeptide that is removed on maturation; that stretch reads IDVTNSVWTSHDQKAFAQIKQSGWGNFILNFGELHLQTG. Positions 56-180 form a coiled coil; it reads GILAELNTEI…AIDESLQLLS (125 aa). Positions 190–225 are excised as a propeptide; sequence IQKVQKNLTKIQQSLKRHSTFQTFIKTLLEIAVEAN. A coiled-coil region spans residues 262 to 354; it reads KDFEARVIQL…AHQALDLLNQ (93 aa).

This sequence belongs to the TMP family. In terms of processing, two components are produced by post-translational processing from the precursor peptide.

Its subcellular location is the trichocyst. Functionally, structural protein that crystallize inside the trichocyst matrix. This is Trichocyst matrix protein T1-B (T1B) from Paramecium tetraurelia.